Consider the following 179-residue polypeptide: Inner membrane-spanning protein YciB (179 aa).

The next 5 helical transmembrane spans lie at 22–42, 50–70, 76–96, 121–141, and 149–169; these read IYAA…YSWV, MALI…FFHN, WKVT…QWVM, LAWA…AFWL, and FKVF…GVYI.

The protein belongs to the YciB family.

The protein localises to the cell inner membrane. Functionally, plays a role in cell envelope biogenesis, maintenance of cell envelope integrity and membrane homeostasis. This is Inner membrane-spanning protein YciB from Citrobacter koseri (strain ATCC BAA-895 / CDC 4225-83 / SGSC4696).